A 142-amino-acid chain; its full sequence is Neuritin (142 aa).

A signal peptide spans 1–27 (MGLKLNGRYISLILAVQIAYLVQAVRA). Gly116 carries GPI-anchor amidated glycine lipidation. Residues 117-142 (AAGSLLPAFPVLLVSLSAALATWLSF) constitute a propeptide, removed in mature form.

Belongs to the neuritin family. Component of the outer core of AMPAR complex. AMPAR complex consists of an inner core made of 4 pore-forming GluA/GRIA proteins (GRIA1, GRIA2, GRIA3 and GRIA4) and 4 major auxiliary subunits arranged in a twofold symmetry. One of the two pairs of distinct binding sites is occupied either by CNIH2, CNIH3 or CACNG2, CACNG3. The other harbors CACNG2, CACNG3, CACNG4, CACNG8 or GSG1L. This inner core of AMPAR complex is complemented by outer core constituents binding directly to the GluA/GRIA proteins at sites distinct from the interaction sites of the inner core constituents. Outer core constituents include at least PRRT1, PRRT2, CKAMP44/SHISA9, FRRS1L and NRN1. The proteins of the inner and outer core serve as a platform for other, more peripherally associated AMPAR constituents. Alone or in combination, these auxiliary subunits control the gating and pharmacology of the AMPAR complex and profoundly impact their biogenesis and protein processing.

It localises to the cell membrane. It is found in the synapse. Its function is as follows. Promotes neurite outgrowth and especially branching of neuritic processes in primary hippocampal and cortical cells. The sequence is that of Neuritin (NRN1) from Homo sapiens (Human).